Here is a 787-residue protein sequence, read N- to C-terminus: Glycine-rich domain-containing protein 2 (787 aa).

As to expression, expressed in leaves, inflorescences, buds, flowers and immature siliques.

Involved in development and stress responses, probably through an auxin-dependent mechanism. The protein is Glycine-rich domain-containing protein 2 of Arabidopsis thaliana (Mouse-ear cress).